Reading from the N-terminus, the 234-residue chain is Probable transcriptional regulatory protein PFL_3960 (234 aa).

The protein belongs to the TACO1 family.

The protein resides in the cytoplasm. The sequence is that of Probable transcriptional regulatory protein PFL_3960 from Pseudomonas fluorescens (strain ATCC BAA-477 / NRRL B-23932 / Pf-5).